A 257-amino-acid chain; its full sequence is V-type proton ATPase subunit D (257 aa).

The tract at residues 211–233 (KKKDLKAKEAQKEENSANKTIME) is disordered. A compositionally biased stretch (basic and acidic residues) spans 216 to 226 (KAKEAQKEENS).

This sequence belongs to the V-ATPase D subunit family. V-ATPase is a heteromultimeric enzyme composed of a peripheral catalytic V1 complex (components A to H) attached to an integral membrane V0 proton pore complex (components: a, c, c', c'' and d).

Its function is as follows. Subunit of the peripheral V1 complex of vacuolar ATPase. Vacuolar ATPase is responsible for acidifying a variety of intracellular compartments in eukaryotic cells, thus providing most of the energy required for transport processes in the vacuolar system. In Dictyostelium discoideum (Social amoeba), this protein is V-type proton ATPase subunit D (atp6v1d).